We begin with the raw amino-acid sequence, 120 residues long: MITKTSKNAARLKRHARVRAKLSGTAERPRLNVFRSNKHIYAQIIDDVNGVTLASASTLDKDLNVESTGDTSAATKVGELVAKRAAEKGISDVVFDRGGYLYHGRVKALADAAREAGLKF.

Belongs to the universal ribosomal protein uL18 family. As to quaternary structure, part of the 50S ribosomal subunit. Part of the 5S rRNA/L5/L18/L25 subcomplex. Contacts the 23S rRNA and 5S rRNA. Required for catalysis of RNase M5.

Functionally, this is one of the proteins that bind and probably mediate the attachment of the 5S RNA into the large ribosomal subunit, where it forms part of the central protuberance. Its function is as follows. Required for correct processing of both the 5' and 3' ends of 5S rRNA precursor, which is does in conjunction with ribonuclease M5 (RNase M5, rnmV). Possibly folds the 5S rRNA precursor into the correct conformation, thus acting as a chaperone. This Bacillus subtilis (strain 168) protein is Large ribosomal subunit protein uL18.